Reading from the N-terminus, the 360-residue chain is Peptide chain release factor 1 (360 aa).

At Gln235 the chain carries N5-methylglutamine. The disordered stretch occupies residues 286 to 313 (RQQAEASTRRNLLGSGDRSDRNRTYNFP).

The protein belongs to the prokaryotic/mitochondrial release factor family. In terms of processing, methylated by PrmC. Methylation increases the termination efficiency of RF1.

It is found in the cytoplasm. Its function is as follows. Peptide chain release factor 1 directs the termination of translation in response to the peptide chain termination codons UAG and UAA. In Cronobacter sakazakii (strain ATCC BAA-894) (Enterobacter sakazakii), this protein is Peptide chain release factor 1.